A 204-amino-acid chain; its full sequence is MTTVINRKYRISRRLGINLWGRAKDPVNRRKYPPGQRGILGFKRLSDFGKQFAAHKKFKFYYAISSKQLRRIFLDAYNRKGYTADNFIGILESRLSSVLYHSGLVPTIYSAKQLISHKHVTVNDKIVNIPSYRVKPGDIVKIRERAAKIPVIVEAVQKQERKAPDYLEADSKEYSVKYLRIPQYSEVPYSADMEVNLVVEFYSR.

In terms of domain architecture, S4 RNA-binding spans 93 to 156 (SRLSSVLYHS…AKIPVIVEAV (64 aa)).

It belongs to the universal ribosomal protein uS4 family. Part of the 30S ribosomal subunit. Contacts protein S5. The interaction surface between S4 and S5 is involved in control of translational fidelity.

In terms of biological role, one of the primary rRNA binding proteins, it binds directly to 16S rRNA where it nucleates assembly of the body of the 30S subunit. Its function is as follows. With S5 and S12 plays an important role in translational accuracy. This chain is Small ribosomal subunit protein uS4, found in Wolbachia sp. subsp. Brugia malayi (strain TRS).